The sequence spans 79 residues: Moronecidin (79 aa).

The N-terminal stretch at 1–22 (MKCATLFLVLSMVVLMAEPGDA) is a signal peptide. Gly-44 is modified (glycine amide). Residues 45 to 79 (GKAEQDQQDQQYQQEQQEQQAQQYQRFNRERAAFD) form a disordered region. Positions 47–79 (AEQDQQDQQYQQEQQEQQAQQYQRFNRERAAFD) are excised as a propeptide. Positions 52–69 (QDQQYQQEQQEQQAQQYQ) are enriched in low complexity.

In terms of tissue distribution, expressed in mast cells in gill, skin and gut, and in lining blood vessels in the viscera. Also in intestine, spleen, anterior kidney, and blood cells.

Its subcellular location is the secreted. Its function is as follows. Antimicrobial peptide with broad-spectrum activity against Gram-positive and Gram-negative bacteria as well as against a variety of fungi. Rapidly inactivates channel catfish herpesvirus (ED(50)=4 uM) and frog virus 3 (ED(50)=13 uM) over a wide temperature range. Seems to disrupt the membranes by adopting an alpha helical conformation and forming toroidal pores. Has hemolytic activity. This is Moronecidin from Morone saxatilis (Striped bass).